We begin with the raw amino-acid sequence, 164 residues long: MADS-box transcription factor 51 (164 aa).

One can recognise an MADS-box domain in the interval 2–62 (ARRGRVQLRR…GKLYEYSSSS (61 aa)). The tract at residues 133-164 (TKSKKMLAKQNGEGSRSRANSSGSRGQEEGSA) is disordered.

Widely expressed.

Its subcellular location is the nucleus. In terms of biological role, probable transcription factor involved in the regulation of flowering time under short day (SD) conditions. Functions as a promoter of flowering under SD conditions, upstream of EHD1, HD3A and MADS14, but downstream of GIGANTEA (GI). May transmit a SD promotion signal from GI to EHD1. Functions independently of MADS50 to control flowering time. This Oryza sativa subsp. japonica (Rice) protein is MADS-box transcription factor 51.